Reading from the N-terminus, the 170-residue chain is MADLIMGIDPGTLVCGYALIKVENRYHIHPHSFGKVKLSQKLALAHRYKQLFTEISTILQQESPKAVVLETQYVHKNPQSTIKLGMARGVLLLAASLQDVPVFEYAPNTAKKAAVGKGNASKKQVQLMVSKLLRVPDLLAEDNEDIADAFALAMCHAHLALYQDLKKTLV.

Residues Asp9, Glu70, and Asp145 contribute to the active site. The Mg(2+) site is built by Asp9, Glu70, and Asp145.

The protein belongs to the RuvC family. As to quaternary structure, homodimer which binds Holliday junction (HJ) DNA. The HJ becomes 2-fold symmetrical on binding to RuvC with unstacked arms; it has a different conformation from HJ DNA in complex with RuvA. In the full resolvosome a probable DNA-RuvA(4)-RuvB(12)-RuvC(2) complex forms which resolves the HJ. Mg(2+) is required as a cofactor.

Its subcellular location is the cytoplasm. The catalysed reaction is Endonucleolytic cleavage at a junction such as a reciprocal single-stranded crossover between two homologous DNA duplexes (Holliday junction).. Functionally, the RuvA-RuvB-RuvC complex processes Holliday junction (HJ) DNA during genetic recombination and DNA repair. Endonuclease that resolves HJ intermediates. Cleaves cruciform DNA by making single-stranded nicks across the HJ at symmetrical positions within the homologous arms, yielding a 5'-phosphate and a 3'-hydroxyl group; requires a central core of homology in the junction. The consensus cleavage sequence is 5'-(A/T)TT(C/G)-3'. Cleavage occurs on the 3'-side of the TT dinucleotide at the point of strand exchange. HJ branch migration catalyzed by RuvA-RuvB allows RuvC to scan DNA until it finds its consensus sequence, where it cleaves and resolves the cruciform DNA. The sequence is that of Crossover junction endodeoxyribonuclease RuvC from Chlamydia trachomatis serovar A (strain ATCC VR-571B / DSM 19440 / HAR-13).